The following is a 70-amino-acid chain: UPF0270 protein VIBHAR_00073 (70 aa).

This sequence belongs to the UPF0270 family.

This is UPF0270 protein VIBHAR_00073 from Vibrio campbellii (strain ATCC BAA-1116).